Reading from the N-terminus, the 273-residue chain is Flagellin FljM (273 aa).

It belongs to the bacterial flagellin family. As to quaternary structure, in C.crescentus, the flagellar filament is composed of multiple flagellins of 29 kDa; 27 kDa and 25 kDa.

The protein resides in the secreted. It is found in the bacterial flagellum. Flagellin is the subunit protein which polymerizes to form the filaments of bacterial flagella. In Caulobacter vibrioides (strain ATCC 19089 / CIP 103742 / CB 15) (Caulobacter crescentus), this protein is Flagellin FljM (fljM).